A 298-amino-acid polypeptide reads, in one-letter code: MLENLETEKSNPKTQNLDEMDIHEILRIINQEDATIALSIAENLENIENVVANCISAIKNHGRIIYVGAGTSGRVAVVDAVETVPTFGIDSGIFLPLIAGGEKAFFQATEHVEDYEESGKKDLEKNNVRSEDYVIGITASGRTPYVKGALSLAKEIGCKTALICNVKNPELMEFSDIVVSLRTGPEVIAGSTRMKAGTAQKMVLNMISTVTMIKLGKTFKNYMVDVKIMNQKLEERAVRIISEVTGLDKKTCKEYLIKADMKPKLAILMILSGKDKEFCIEALKKNEVLHEALKTLKN.

In terms of domain architecture, SIS spans 54–217 (CISAIKNHGR…STVTMIKLGK (164 aa)). Glu82 functions as the Proton donor in the catalytic mechanism. The active site involves Glu113.

The protein belongs to the GCKR-like family. MurNAc-6-P etherase subfamily. As to quaternary structure, homodimer.

The catalysed reaction is N-acetyl-D-muramate 6-phosphate + H2O = N-acetyl-D-glucosamine 6-phosphate + (R)-lactate. It participates in amino-sugar metabolism; N-acetylmuramate degradation. Functionally, specifically catalyzes the cleavage of the D-lactyl ether substituent of MurNAc 6-phosphate, producing GlcNAc 6-phosphate and D-lactate. The sequence is that of N-acetylmuramic acid 6-phosphate etherase from Petrotoga mobilis (strain DSM 10674 / SJ95).